The chain runs to 545 residues: Serine/threonine-protein kinase PAK 1 (545 aa).

A disordered region spans residues 1-75 (MSNNGVDIQD…KKREKERPEI (75 aa)). S2 is modified (N-acetylserine). S21 is subject to Phosphoserine; by PKB and autocatalysis. A Phosphoserine; by autocatalysis modification is found at S57. The interval 70–140 (KERPEISLPS…YNSKKTSNSK (71 aa)) is autoregulatory region. The 14-residue stretch at 75–88 (ISLPSDFEHTIHVG) folds into the CRIB domain. Residues 75 to 105 (ISLPSDFEHTIHVGFDAVTGEFTGMPEQWAR) are GTPase-binding. Phosphothreonine; by OXSR1 is present on T84. At S115 the chain carries Phosphoserine. Phosphotyrosine is present on residues Y131 and Y142. S144 and S149 each carry phosphoserine; by autocatalysis. The disordered stretch occupies residues 150–198 (AEDYNSSNTLNVKTVSETPAVPPVSEDDEDDDDDATPPPVIAPRPEHTK). Residues 152-166 (DYNSSNTLNVKTVSE) are compositionally biased toward polar residues. Y153 is modified (phosphotyrosine; by JAK2). S174 is modified (phosphoserine). Residues 174 to 184 (SEDDEDDDDDA) show a composition bias toward acidic residues. Residue T185 is modified to Phosphothreonine. Position 199 is a phosphoserine; by autocatalysis (S199). Position 201 is a phosphotyrosine; by JAK2 (Y201). S204 is subject to Phosphoserine; by autocatalysis. The tract at residues 210–250 (PVTPTRDVATSPISPTENNTTPPDALTRNTEKQKKKPKMSD) is disordered. 2 positions are modified to phosphothreonine: T212 and T219. S220 and S223 each carry phosphoserine. The span at 220 to 231 (SPISPTENNTTP) shows a compositional bias: polar residues. Phosphothreonine is present on residues T225, T229, and T230. In terms of domain architecture, Protein kinase spans 270–521 (YTPFEKIGQG…AKELLQHQFL (252 aa)). ATP is bound at residue 276 to 284 (IGQGASGTV). Y285 is modified (phosphotyrosine; by JAK2). Position 299 (K299) interacts with ATP. D389 serves as the catalytic Proton acceptor. T423 carries the phosphothreonine; by autocatalysis, BRSK2 and PDPK1 modification.

This sequence belongs to the protein kinase superfamily. STE Ser/Thr protein kinase family. STE20 subfamily. Homodimer in its autoinhibited state. Active as monomer. Interacts with GIT1. Component of cytoplasmic complexes, which also contains PXN, ARHGEF7 and GIT1. Interacts with NISCH. Interacts with DVL1; mediates the formation of a DVL1, MUSK and PAK1 ternary complex involved in AChR clustering. Binds to the caspase-cleaved p110 isoform of CDC2L1 and CDC2L2, p110C, but not the full-length proteins. Interacts with ARHGEF7. Interacts tightly with GTP-bound but not GDP-bound CDC42/P21 and RAC1. Interacts with SCRIB. Interacts with PDPK1. Interacts (via kinase domain) with RAF1. Interacts with NCK1 and NCK2. Interacts with TBCB. Interacts with BRSK2. Interacts with SNAI1. Interacts with CIB1 (via N-terminal region); the interaction is direct, promotes PAK1 activity and occurs in a calcium-dependent manner. Interacts with INPP5K. Interacts with gamma-tubulin. Interacts with RHOU; the interaction promotes PAK1 activation. Requires Mg(2+) as cofactor. In terms of processing, autophosphorylated in trans, meaning that in a dimer, one kinase molecule phosphorylates the other one. Activated by autophosphorylation at Thr-423 in response to a conformation change, triggered by interaction with GTP-bound CDC42 or RAC1. Activated by phosphorylation at Thr-423 by BRSK2 and by PDPK1. Phosphorylated by JAK2 in response to PRL; this increases PAK1 kinase activity. Phosphorylated at Ser-21 by PKB/AKT; this reduces interaction with NCK1 and association with focal adhesion sites. Upon DNA damage, phosphorylated at Thr-212 and translocates to the nucleoplasm. Phosphorylated at tyrosine residues, which can be enhanced by NTN1.

It localises to the cytoplasm. Its subcellular location is the cell junction. It is found in the focal adhesion. The protein localises to the cell projection. The protein resides in the lamellipodium. It localises to the cell membrane. Its subcellular location is the ruffle membrane. It is found in the invadopodium. The protein localises to the nucleus. The protein resides in the nucleoplasm. It localises to the chromosome. Its subcellular location is the cytoskeleton. It is found in the microtubule organizing center. The protein localises to the centrosome. The enzyme catalyses L-seryl-[protein] + ATP = O-phospho-L-seryl-[protein] + ADP + H(+). The catalysed reaction is L-threonyl-[protein] + ATP = O-phospho-L-threonyl-[protein] + ADP + H(+). Its activity is regulated as follows. Phosphorylation of Thr-84 by OXSR1 inhibits activation. Activated by binding small G proteins. Binding of GTP-bound CDC42 or RAC1 to the autoregulatory region releases monomers from the autoinhibited dimer, and enables activation by phosphorylation of Thr-423. Protein kinase involved in intracellular signaling pathways downstream of integrins and receptor-type kinases that plays an important role in cytoskeleton dynamics, in cell adhesion, migration, proliferation, apoptosis, mitosis, and in vesicle-mediated transport processes. Can directly phosphorylate BAD and protects cells against apoptosis. Activated by interaction with CDC42 and RAC1. Functions as a GTPase effector that links the Rho-related GTPases CDC42 and RAC1 to the JNK MAP kinase pathway. Phosphorylates and activates MAP2K1, and thereby mediates activation of downstream MAP kinases. Involved in the reorganization of the actin cytoskeleton, actin stress fibers and of focal adhesion complexes. Phosphorylates the tubulin chaperone TBCB and thereby plays a role in the regulation of microtubule biogenesis and organization of the tubulin cytoskeleton. Plays a role in the regulation of insulin secretion in response to elevated glucose levels. Part of a ternary complex that contains PAK1, DVL1 and MUSK that is important for MUSK-dependent regulation of AChR clustering during the formation of the neuromuscular junction (NMJ). Activity is inhibited in cells undergoing apoptosis, potentially due to binding of CDC2L1 and CDC2L2. Phosphorylates MYL9/MLC2. Phosphorylates RAF1 at 'Ser-338' and 'Ser-339' resulting in: activation of RAF1, stimulation of RAF1 translocation to mitochondria, phosphorylation of BAD by RAF1, and RAF1 binding to BCL2. Phosphorylates SNAI1 at 'Ser-246' promoting its transcriptional repressor activity by increasing its accumulation in the nucleus. In podocytes, promotes NR3C2 nuclear localization. Required for atypical chemokine receptor ACKR2-induced phosphorylation of LIMK1 and cofilin (CFL1) and for the up-regulation of ACKR2 from endosomal compartment to cell membrane, increasing its efficiency in chemokine uptake and degradation. In synapses, seems to mediate the regulation of F-actin cluster formation performed by SHANK3, maybe through CFL1 phosphorylation and inactivation. Plays a role in RUFY3-mediated facilitating gastric cancer cells migration and invasion. In response to DNA damage, phosphorylates MORC2 which activates its ATPase activity and facilitates chromatin remodeling. In neurons, plays a crucial role in regulating GABA(A) receptor synaptic stability and hence GABAergic inhibitory synaptic transmission through its role in F-actin stabilization. In hippocampal neurons, necessary for the formation of dendritic spines and excitatory synapses; this function is dependent on kinase activity and may be exerted by the regulation of actomyosin contractility through the phosphorylation of myosin II regulatory light chain (MLC). Along with GIT1, positively regulates microtubule nucleation during interphase. Phosphorylates FXR1, promoting its localization to stress granules and activity. Phosphorylates ILK on 'Thr-173' and 'Ser-246', promoting nuclear export of ILK. The chain is Serine/threonine-protein kinase PAK 1 from Mus musculus (Mouse).